A 158-amino-acid chain; its full sequence is Endoribonuclease YbeY (158 aa).

Residues His-119, His-123, and His-129 each contribute to the Zn(2+) site.

This sequence belongs to the endoribonuclease YbeY family. Zn(2+) serves as cofactor.

The protein resides in the cytoplasm. Single strand-specific metallo-endoribonuclease involved in late-stage 70S ribosome quality control and in maturation of the 3' terminus of the 16S rRNA. The protein is Endoribonuclease YbeY of Acinetobacter baumannii (strain SDF).